A 226-amino-acid chain; its full sequence is Uracil-DNA glycosylase (226 aa).

Asp-65 functions as the Proton acceptor in the catalytic mechanism.

It belongs to the uracil-DNA glycosylase (UDG) superfamily. UNG family.

The protein resides in the cytoplasm. The catalysed reaction is Hydrolyzes single-stranded DNA or mismatched double-stranded DNA and polynucleotides, releasing free uracil.. Excises uracil residues from the DNA which can arise as a result of misincorporation of dUMP residues by DNA polymerase or due to deamination of cytosine. This chain is Uracil-DNA glycosylase, found in Enterococcus faecalis (strain ATCC 700802 / V583).